Here is a 176-residue protein sequence, read N- to C-terminus: Urease accessory protein UreE (176 aa).

The interval 134 to 176 (FTPEGGAYGHGRTHAHEHGHTNHHGQHHDHADHGHSHDHSHDQ) is disordered. Residues 161–176 (HDHADHGHSHDHSHDQ) show a composition bias toward basic and acidic residues.

The protein belongs to the UreE family.

Its subcellular location is the cytoplasm. Functionally, involved in urease metallocenter assembly. Binds nickel. Probably functions as a nickel donor during metallocenter assembly. The protein is Urease accessory protein UreE of Ruegeria sp. (strain TM1040) (Silicibacter sp.).